The following is a 123-amino-acid chain: Small ribosomal subunit protein uS12 (123 aa).

Positions 1 to 32 (MPTIQQLVRKGRKDKKAKVKTAALKGSPQRRG) are disordered. The segment covering 9-19 (RKGRKDKKAKV) has biased composition (basic residues). Aspartate 89 carries the post-translational modification 3-methylthioaspartic acid.

Belongs to the universal ribosomal protein uS12 family. In terms of assembly, part of the 30S ribosomal subunit. Contacts proteins S8 and S17. May interact with IF1 in the 30S initiation complex.

In terms of biological role, with S4 and S5 plays an important role in translational accuracy. Its function is as follows. Interacts with and stabilizes bases of the 16S rRNA that are involved in tRNA selection in the A site and with the mRNA backbone. Located at the interface of the 30S and 50S subunits, it traverses the body of the 30S subunit contacting proteins on the other side and probably holding the rRNA structure together. The combined cluster of proteins S8, S12 and S17 appears to hold together the shoulder and platform of the 30S subunit. The protein is Small ribosomal subunit protein uS12 of Corynebacterium kroppenstedtii (strain DSM 44385 / JCM 11950 / CIP 105744 / CCUG 35717).